The sequence spans 87 residues: Ragulator complex protein LAMTOR4 homolog (87 aa).

This sequence belongs to the LAMTOR4 family. As to quaternary structure, part of the Ragulator complex.

It localises to the lysosome. Functionally, regulator of the TOR pathway, a signaling cascade that promotes cell growth in response to growth factors, energy levels, and amino acids. As part of the Ragulator complex, may activate the TOR signaling cascade in response to amino acids. In Dictyostelium discoideum (Social amoeba), this protein is Ragulator complex protein LAMTOR4 homolog.